A 425-amino-acid polypeptide reads, in one-letter code: Serine--tRNA ligase (425 aa).

Residue 229–231 participates in L-serine binding; sequence TSE. ATP is bound by residues 259–261 and Val275; that span reads RKE. Glu282 is a binding site for L-serine. 349–352 serves as a coordination point for ATP; that stretch reads EVTS. Thr384 provides a ligand contact to L-serine.

This sequence belongs to the class-II aminoacyl-tRNA synthetase family. Type-1 seryl-tRNA synthetase subfamily. Homodimer. The tRNA molecule binds across the dimer.

Its subcellular location is the cytoplasm. The enzyme catalyses tRNA(Ser) + L-serine + ATP = L-seryl-tRNA(Ser) + AMP + diphosphate + H(+). It carries out the reaction tRNA(Sec) + L-serine + ATP = L-seryl-tRNA(Sec) + AMP + diphosphate + H(+). The protein operates within aminoacyl-tRNA biosynthesis; selenocysteinyl-tRNA(Sec) biosynthesis; L-seryl-tRNA(Sec) from L-serine and tRNA(Sec): step 1/1. In terms of biological role, catalyzes the attachment of serine to tRNA(Ser). Is also able to aminoacylate tRNA(Sec) with serine, to form the misacylated tRNA L-seryl-tRNA(Sec), which will be further converted into selenocysteinyl-tRNA(Sec). This chain is Serine--tRNA ligase, found in Borreliella burgdorferi (strain ATCC 35210 / DSM 4680 / CIP 102532 / B31) (Borrelia burgdorferi).